A 237-amino-acid chain; its full sequence is N-(5'-phosphoribosyl)anthranilate isomerase (237 aa).

It belongs to the TrpF family.

It catalyses the reaction N-(5-phospho-beta-D-ribosyl)anthranilate = 1-(2-carboxyphenylamino)-1-deoxy-D-ribulose 5-phosphate. It functions in the pathway amino-acid biosynthesis; L-tryptophan biosynthesis; L-tryptophan from chorismate: step 3/5. In Desulfitobacterium hafniense (strain Y51), this protein is N-(5'-phosphoribosyl)anthranilate isomerase.